The chain runs to 159 residues: Ribosomal RNA large subunit methyltransferase H (159 aa).

S-adenosyl-L-methionine-binding positions include Leu-76, Gly-108, and 127 to 132 (FSKMTF).

The protein belongs to the RNA methyltransferase RlmH family. In terms of assembly, homodimer.

It localises to the cytoplasm. It carries out the reaction pseudouridine(1915) in 23S rRNA + S-adenosyl-L-methionine = N(3)-methylpseudouridine(1915) in 23S rRNA + S-adenosyl-L-homocysteine + H(+). Its function is as follows. Specifically methylates the pseudouridine at position 1915 (m3Psi1915) in 23S rRNA. The protein is Ribosomal RNA large subunit methyltransferase H of Staphylococcus aureus (strain Mu3 / ATCC 700698).